A 231-amino-acid polypeptide reads, in one-letter code: Orotidine 5'-phosphate decarboxylase (231 aa).

Residues Asp11, Lys33, 60–69 (DLKFHDIPNT), Thr120, Arg181, Gln190, Gly210, and Arg211 contribute to the substrate site. Lys62 acts as the Proton donor in catalysis.

It belongs to the OMP decarboxylase family. Type 1 subfamily. As to quaternary structure, homodimer.

It catalyses the reaction orotidine 5'-phosphate + H(+) = UMP + CO2. The protein operates within pyrimidine metabolism; UMP biosynthesis via de novo pathway; UMP from orotate: step 2/2. Functionally, catalyzes the decarboxylation of orotidine 5'-monophosphate (OMP) to uridine 5'-monophosphate (UMP). The protein is Orotidine 5'-phosphate decarboxylase of Vibrio cholerae serotype O1 (strain ATCC 39541 / Classical Ogawa 395 / O395).